Here is a 122-residue protein sequence, read N- to C-terminus: Small ribosomal subunit protein uS13 (122 aa).

Residues 94–122 are disordered; that stretch reads KQLPVRGQRTHTNARTRKGKAKPIAGKKK.

It belongs to the universal ribosomal protein uS13 family. Part of the 30S ribosomal subunit. Forms a loose heterodimer with protein S19. Forms two bridges to the 50S subunit in the 70S ribosome.

Located at the top of the head of the 30S subunit, it contacts several helices of the 16S rRNA. In the 70S ribosome it contacts the 23S rRNA (bridge B1a) and protein L5 of the 50S subunit (bridge B1b), connecting the 2 subunits; these bridges are implicated in subunit movement. Contacts the tRNAs in the A and P-sites. The sequence is that of Small ribosomal subunit protein uS13 from Methylorubrum populi (strain ATCC BAA-705 / NCIMB 13946 / BJ001) (Methylobacterium populi).